The primary structure comprises 143 residues: MAMAFKMATTGMRVTDECTSSFMDMKWKKVHRYIVFKIEEKSRKVTVDKVGGAGESYHDLEDSLPVDDCRYAVFDFDFVTVDNCRKSKIFFIAWSPEASKIRAKILYATSKDGLRRVLEGIHYELQATDPTEMGFDIIQDRAK.

Residues 11–143 (GMRVTDECTS…GFDIIQDRAK (133 aa)) form the ADF-H domain.

It belongs to the actin-binding proteins ADF family. In terms of tissue distribution, expressed exclusively in root tip meristem.

The protein resides in the cytoplasm. The protein localises to the cytoskeleton. Actin-depolymerizing protein. Severs actin filaments (F-actin) and binds to actin monomers. This Arabidopsis thaliana (Mouse-ear cress) protein is Actin-depolymerizing factor 5 (ADF5).